A 125-amino-acid chain; its full sequence is Large ribosomal subunit protein bL20 (125 aa).

The protein belongs to the bacterial ribosomal protein bL20 family.

Functionally, binds directly to 23S ribosomal RNA and is necessary for the in vitro assembly process of the 50S ribosomal subunit. It is not involved in the protein synthesizing functions of that subunit. The polypeptide is Large ribosomal subunit protein bL20 (Rhodospirillum rubrum (strain ATCC 11170 / ATH 1.1.1 / DSM 467 / LMG 4362 / NCIMB 8255 / S1)).